A 124-amino-acid chain; its full sequence is MPTINQLVRKERKKIIEKSKSPALKNCPQRRGVCTRVYTTTPKKPNSALRKVAKVRLTSGFEVISYIGGEGHNLQEHSIVLVRGGRVKDLPGVKYHIVRGALDTAGVAKRTVSRSKYGAKRPKK.

Asp-89 carries the post-translational modification 3-methylthioaspartic acid.

Belongs to the universal ribosomal protein uS12 family. In terms of assembly, part of the 30S ribosomal subunit. Contacts proteins S8 and S17. May interact with IF1 in the 30S initiation complex.

Its function is as follows. With S4 and S5 plays an important role in translational accuracy. In terms of biological role, interacts with and stabilizes bases of the 16S rRNA that are involved in tRNA selection in the A site and with the mRNA backbone. Located at the interface of the 30S and 50S subunits, it traverses the body of the 30S subunit contacting proteins on the other side and probably holding the rRNA structure together. The combined cluster of proteins S8, S12 and S17 appears to hold together the shoulder and platform of the 30S subunit. This Campylobacter hominis (strain ATCC BAA-381 / DSM 21671 / CCUG 45161 / LMG 19568 / NCTC 13146 / CH001A) protein is Small ribosomal subunit protein uS12.